Here is a 172-residue protein sequence, read N- to C-terminus: Small ribosomal subunit protein bS6 (172 aa).

The interval 100-172 (LPAKRVVKTS…ENKEIEKKED (73 aa)) is disordered. Residues 107–172 (KTSEKNVKED…ENKEIEKKED (66 aa)) show a composition bias toward basic and acidic residues.

It belongs to the bacterial ribosomal protein bS6 family.

Functionally, binds together with bS18 to 16S ribosomal RNA. The chain is Small ribosomal subunit protein bS6 from Prochlorococcus marinus (strain MIT 9211).